The primary structure comprises 201 residues: Holliday junction branch migration complex subunit RuvA (201 aa).

Residues 1–63 are domain I; the sequence is MYDYIKGIVK…EDNISLFGFQ (63 aa). Residues 64 to 142 form a domain II region; that stretch reads STEERYLFKK…DVVASEIVYK (79 aa). The tract at residues 143–153 is flexible linker; the sequence is AAENDIVTGLS. Residues 153-201 are domain III; it reads SPQLEEAVLALEALGYSTRELKKVIPKMAKENDLTSDAYIKLALRLMTK.

It belongs to the RuvA family. Homotetramer. Forms an RuvA(8)-RuvB(12)-Holliday junction (HJ) complex. HJ DNA is sandwiched between 2 RuvA tetramers; dsDNA enters through RuvA and exits via RuvB. An RuvB hexamer assembles on each DNA strand where it exits the tetramer. Each RuvB hexamer is contacted by two RuvA subunits (via domain III) on 2 adjacent RuvB subunits; this complex drives branch migration. In the full resolvosome a probable DNA-RuvA(4)-RuvB(12)-RuvC(2) complex forms which resolves the HJ.

It localises to the cytoplasm. Its function is as follows. The RuvA-RuvB-RuvC complex processes Holliday junction (HJ) DNA during genetic recombination and DNA repair, while the RuvA-RuvB complex plays an important role in the rescue of blocked DNA replication forks via replication fork reversal (RFR). RuvA specifically binds to HJ cruciform DNA, conferring on it an open structure. The RuvB hexamer acts as an ATP-dependent pump, pulling dsDNA into and through the RuvAB complex. HJ branch migration allows RuvC to scan DNA until it finds its consensus sequence, where it cleaves and resolves the cruciform DNA. This chain is Holliday junction branch migration complex subunit RuvA, found in Listeria innocua serovar 6a (strain ATCC BAA-680 / CLIP 11262).